The sequence spans 226 residues: Urease accessory protein UreF (226 aa).

The protein belongs to the UreF family. As to quaternary structure, ureD, UreF and UreG form a complex that acts as a GTP-hydrolysis-dependent molecular chaperone, activating the urease apoprotein by helping to assemble the nickel containing metallocenter of UreC. The UreE protein probably delivers the nickel.

It is found in the cytoplasm. Functionally, required for maturation of urease via the functional incorporation of the urease nickel metallocenter. In Burkholderia ambifaria (strain ATCC BAA-244 / DSM 16087 / CCUG 44356 / LMG 19182 / AMMD) (Burkholderia cepacia (strain AMMD)), this protein is Urease accessory protein UreF.